Reading from the N-terminus, the 278-residue chain is 2-dehydro-3-deoxyphosphooctonate aldolase (278 aa).

This sequence belongs to the KdsA family.

It localises to the cytoplasm. It carries out the reaction D-arabinose 5-phosphate + phosphoenolpyruvate + H2O = 3-deoxy-alpha-D-manno-2-octulosonate-8-phosphate + phosphate. It participates in carbohydrate biosynthesis; 3-deoxy-D-manno-octulosonate biosynthesis; 3-deoxy-D-manno-octulosonate from D-ribulose 5-phosphate: step 2/3. The protein operates within bacterial outer membrane biogenesis; lipopolysaccharide biosynthesis. This is 2-dehydro-3-deoxyphosphooctonate aldolase from Koribacter versatilis (strain Ellin345).